We begin with the raw amino-acid sequence, 360 residues long: Nicotinate-nucleotide--dimethylbenzimidazole phosphoribosyltransferase (360 aa).

The active-site Proton acceptor is the Glu-327.

It belongs to the CobT family.

It carries out the reaction 5,6-dimethylbenzimidazole + nicotinate beta-D-ribonucleotide = alpha-ribazole 5'-phosphate + nicotinate + H(+). It participates in nucleoside biosynthesis; alpha-ribazole biosynthesis; alpha-ribazole from 5,6-dimethylbenzimidazole: step 1/2. Its function is as follows. Catalyzes the synthesis of alpha-ribazole-5'-phosphate from nicotinate mononucleotide (NAMN) and 5,6-dimethylbenzimidazole (DMB). The chain is Nicotinate-nucleotide--dimethylbenzimidazole phosphoribosyltransferase from Shewanella baltica (strain OS185).